We begin with the raw amino-acid sequence, 235 residues long: RNA polymerase sigma-E factor (235 aa).

A Polymerase core binding motif is present at residues 82-95 (DLISVGTIGLIKAV). The segment at residues 202–221 (QKEVADMLGISQSYISRLEK) is a DNA-binding region (H-T-H motif).

It belongs to the sigma-70 factor family.

In terms of biological role, sigma factors are initiation factors that promote the attachment of RNA polymerase to specific initiation sites and are then released. This sigma factor is responsible for the expression of sporulation specific genes. The chain is RNA polymerase sigma-E factor (sigE) from Clostridium acetobutylicum (strain ATCC 824 / DSM 792 / JCM 1419 / IAM 19013 / LMG 5710 / NBRC 13948 / NRRL B-527 / VKM B-1787 / 2291 / W).